The following is a 333-amino-acid chain: Transcription factor MYB36 (333 aa).

HTH myb-type domains follow at residues 9–62 (KANV…LNYL) and 63–117 (RPNI…KKKL). 2 consecutive DNA-binding regions (H-T-H motif) follow at residues 38–62 (WIAL…LNYL) and 90–113 (WSII…NTKL). Residues 119–150 (GRQKQMNRQDSITDSTENNLSNNNNNKSPQNL) form a disordered region. Over residues 122 to 135 (KQMNRQDSITDSTE) the composition is skewed to polar residues. Residues 136-150 (NNLSNNNNNKSPQNL) show a composition bias toward low complexity.

In terms of tissue distribution, expressed in leaves, roots (endodermis-specific) and seedlings.

It localises to the nucleus. Functionally, transcription factors that activates genes required for endodermal differentiation but represses genes involved in proliferative divisions, thus regulating the transition from proliferation to differentiation in root endodermis. Required for Casparian strip formation by positively regulating the expression of the Casparian strip genes CASP1, PER64 and ESB1 and other endodermis-specific genes, thus triggering correct localized lignin biosynthesis in root endodermis and subsequently regulating global ion homeostasis. This is Transcription factor MYB36 from Arabidopsis thaliana (Mouse-ear cress).